The chain runs to 547 residues: Probable acetolactate synthase (547 aa).

Glu57 contacts thiamine diphosphate. Residues Pro159 and 299-318 (DRVE…LYGD) contribute to the FAD site. Residues 388-468 (DFGSYAGRMI…VVSVIGNNGI (81 aa)) are thiamine pyrophosphate binding. Asp439 and Asn466 together coordinate Mg(2+).

It belongs to the TPP enzyme family. Requires Mg(2+) as cofactor. Thiamine diphosphate is required as a cofactor.

It carries out the reaction 2 pyruvate + H(+) = (2S)-2-acetolactate + CO2. Its pathway is amino-acid biosynthesis; L-isoleucine biosynthesis; L-isoleucine from 2-oxobutanoate: step 1/4. The protein operates within amino-acid biosynthesis; L-valine biosynthesis; L-valine from pyruvate: step 1/4. This is Probable acetolactate synthase (ilvG) from Mycobacterium bovis (strain ATCC BAA-935 / AF2122/97).